The sequence spans 708 residues: MEANHQRNDLGLVALTMLAQYHNISLNPEEIKHKFDLDGKGLSLTSWLLAAKSLALKAKHIKKEISRLHLVNLPALVWQDNGKHFLLVKVDTDNNRYLTYNLEQDAPQILSQDEFEACYQGQLILVTSRASVVGQLAKFDFTWFIPAVIKYRKIFLETLIVSIFLQIFALITPLFFQVVMDKVLVHRGFSTLNIITVALAIVIIFEIVLSGLRTYVFSHSTSRIDVELGAKLFRHLLSLPISYFENRRVGDTVARVRELDQIRNFLTGQALTSVLDLLFSFIFFAVMWYYSPKLTLVILGSLPCYILWSIFISPILRRRLDDKFARSADNQAFLVESVTAINMIKAMAVAPQMTDTWDKQLASYVSSSFRVTVLATIGQQGVQLIQKTVMVINLWLGAHLVISGDLSIGQLIAFNMLSGQVIAPVIRLAQLWQDFQQVGISVTRLGDVLNSPTEQYQGKLSLPEIKGDISFKNIRFRYKPDAPTILNNVNLEIRQGEVIGIVGRSGSGKSTLTKLLQRFYIPENGQVLIDGHDLALADPNWLRRQIGVVLQDNVLLNRSIRENIALSDPGMPMERVIYAAKLAGAHDFISELREGYNTIVGEQGAGLSGGQRQRIAIARALVNNPKILIFDEATSALDYESEHIIMQNMQKICQGRTVILIAHRLSTVKNADRIIVMEKGEIVEQGKHHELLQNSNGLYSYLHQLQLN.

Residues 1 to 126 (MEANHQRNDL…ACYQGQLILV (126 aa)) enclose the Peptidase C39 domain. The 283-residue stretch at 155 to 437 (FLETLIVSIF…LAQLWQDFQQ (283 aa)) folds into the ABC transmembrane type-1 domain. A run of 5 helical transmembrane segments spans residues 159–179 (LIVS…FQVV), 192–212 (LNII…LSGL), 270–290 (ALTS…MWYY), 296–316 (LVIL…SPIL), and 389–409 (VMVI…LSIG). The 236-residue stretch at 469-704 (ISFKNIRFRY…SNGLYSYLHQ (236 aa)) folds into the ABC transporter domain. Position 503 to 510 (503 to 510 (GRSGSGKS)) interacts with ATP.

The protein belongs to the ABC transporter superfamily. Protein-1 exporter (TC 3.A.1.109) family. In terms of assembly, homodimer.

Its subcellular location is the cell inner membrane. It catalyses the reaction ATP + H2O + proteinSide 1 = ADP + phosphate + proteinSide 2.. Part of the ABC transporter complex LktBD involved in leukotoxin export. Transmembrane domains (TMD) form a pore in the inner membrane and the ATP-binding domain (NBD) is responsible for energy generation. The sequence is that of Leukotoxin translocation ATP-binding protein LktB (lktB) from Mannheimia haemolytica (Pasteurella haemolytica).